Here is a 109-residue protein sequence, read N- to C-terminus: Large ribosomal subunit protein uL24 (109 aa).

The disordered stretch occupies residues 1–24 (MANVTTDIKRNDTVAVTSGKDKGK).

It belongs to the universal ribosomal protein uL24 family. In terms of assembly, part of the 50S ribosomal subunit.

In terms of biological role, one of two assembly initiator proteins, it binds directly to the 5'-end of the 23S rRNA, where it nucleates assembly of the 50S subunit. Its function is as follows. One of the proteins that surrounds the polypeptide exit tunnel on the outside of the subunit. The chain is Large ribosomal subunit protein uL24 from Koribacter versatilis (strain Ellin345).